A 347-amino-acid polypeptide reads, in one-letter code: Dual specificity mitogen-activated protein kinase kinase 3 (347 aa).

M1 carries the post-translational modification N-acetylmethionine. Positions M1–S15 are enriched in low complexity. The disordered stretch occupies residues M1 to S46. 2 positions are modified to phosphoserine: S3 and S15. Residues L64–F325 enclose the Protein kinase domain. ATP is bound by residues L70–V78 and K93. The Proton acceptor role is filled by D190. S218 carries the post-translational modification Phosphoserine. A Phosphothreonine modification is found at T222.

It belongs to the protein kinase superfamily. STE Ser/Thr protein kinase family. MAP kinase kinase subfamily. As to quaternary structure, component of a signaling complex containing at least AKAP13, PKN1, MAPK14, ZAK and MAP2K3. Within this complex, AKAP13 interacts directly with PKN1, which in turn recruits MAPK14, MAP2K3 and ZAK. Binds to DYRK1B/MIRK and increases its kinase activity. Part of a complex with MAP3K3, RAC1 and CCM2. Interacts with ARRB1. (Microbial infection) Interacts with Yersinia YopJ. In terms of processing, autophosphorylated. Phosphorylation on Ser-218 and Thr-222 by MAP kinase kinase kinases positively regulates the kinase activity. Phosphorylated by TAOK2. Post-translationally, (Microbial infection) Yersinia YopJ may acetylate Ser/Thr residues, preventing phosphorylation and activation, thus blocking the MAPK signaling pathway. As to expression, abundant expression is seen in the skeletal muscle. It is also widely expressed in other tissues.

It catalyses the reaction L-seryl-[protein] + ATP = O-phospho-L-seryl-[protein] + ADP + H(+). The enzyme catalyses L-threonyl-[protein] + ATP = O-phospho-L-threonyl-[protein] + ADP + H(+). It carries out the reaction L-tyrosyl-[protein] + ATP = O-phospho-L-tyrosyl-[protein] + ADP + H(+). With respect to regulation, activated by dual phosphorylation on Ser-218 and Thr-222. Functionally, dual specificity kinase. Is activated by cytokines and environmental stress in vivo. Catalyzes the concomitant phosphorylation of a threonine and a tyrosine residue in the MAP kinase p38. Part of a signaling cascade that begins with the activation of the adrenergic receptor ADRA1B and leads to the activation of MAPK14. In Homo sapiens (Human), this protein is Dual specificity mitogen-activated protein kinase kinase 3 (MAP2K3).